The primary structure comprises 429 residues: Enolase (429 aa).

Glutamine 163 lines the (2R)-2-phosphoglycerate pocket. Glutamate 205 acts as the Proton donor in catalysis. Mg(2+) contacts are provided by aspartate 242, glutamate 286, and aspartate 313. 4 residues coordinate (2R)-2-phosphoglycerate: lysine 338, arginine 367, serine 368, and lysine 389. The Proton acceptor role is filled by lysine 338.

The protein belongs to the enolase family. The cofactor is Mg(2+).

It is found in the cytoplasm. It localises to the secreted. The protein localises to the cell surface. It carries out the reaction (2R)-2-phosphoglycerate = phosphoenolpyruvate + H2O. It participates in carbohydrate degradation; glycolysis; pyruvate from D-glyceraldehyde 3-phosphate: step 4/5. Functionally, catalyzes the reversible conversion of 2-phosphoglycerate (2-PG) into phosphoenolpyruvate (PEP). It is essential for the degradation of carbohydrates via glycolysis. The polypeptide is Enolase (Geobacter metallireducens (strain ATCC 53774 / DSM 7210 / GS-15)).